The chain runs to 163 residues: Nucleotide-binding protein YajQ (163 aa).

This sequence belongs to the YajQ family.

In terms of biological role, nucleotide-binding protein. The chain is Nucleotide-binding protein YajQ from Salmonella heidelberg (strain SL476).